Here is a 180-residue protein sequence, read N- to C-terminus: ATP-dependent protease subunit HslV (180 aa).

The active site involves threonine 7. Na(+) contacts are provided by glycine 165, cysteine 168, and threonine 171.

It belongs to the peptidase T1B family. HslV subfamily. As to quaternary structure, a double ring-shaped homohexamer of HslV is capped on each side by a ring-shaped HslU homohexamer. The assembly of the HslU/HslV complex is dependent on binding of ATP.

The protein resides in the cytoplasm. The enzyme catalyses ATP-dependent cleavage of peptide bonds with broad specificity.. Allosterically activated by HslU binding. Functionally, protease subunit of a proteasome-like degradation complex believed to be a general protein degrading machinery. The polypeptide is ATP-dependent protease subunit HslV (Bacillus cereus (strain G9842)).